A 218-amino-acid chain; its full sequence is MQADFWHARWANNQIGFHLDEVNPYLMRHLSRLRLQAGEQVLVPLCGKTLDLAWLAAQGLDVLGVELSEKAVSDFFAENGLQPAIDQMDGFRRYRAAGITLLQGDFFALQSGHLAGCRAFYDRAALIALPPDMRERYAGHLQAILPARSLGLLVTIDYPQGEMAGPPFAVPDAEVREHYAAGWRIEELERGDVLGVNWKFLERGVSWLNEAVYLLQRG.

4 residues coordinate S-adenosyl-L-methionine: Trp10, Leu45, Glu66, and Arg123.

It belongs to the class I-like SAM-binding methyltransferase superfamily. TPMT family.

The protein localises to the cytoplasm. It catalyses the reaction S-adenosyl-L-methionine + a thiopurine = S-adenosyl-L-homocysteine + a thiopurine S-methylether.. This is Thiopurine S-methyltransferase from Pseudomonas paraeruginosa (strain DSM 24068 / PA7) (Pseudomonas aeruginosa (strain PA7)).